The primary structure comprises 450 residues: 23S rRNA (uracil(1939)-C(5))-methyltransferase RlmD (450 aa).

A TRAM domain is found at 1–62 (MPVAGPLEIV…PSYEQATLVD (62 aa)). [4Fe-4S] cluster contacts are provided by cysteine 75, cysteine 81, cysteine 84, and cysteine 163. Residues glutamine 271, phenylalanine 300, asparagine 305, glutamate 321, asparagine 349, and aspartate 370 each coordinate S-adenosyl-L-methionine. The active-site Nucleophile is cysteine 406.

Belongs to the class I-like SAM-binding methyltransferase superfamily. RNA M5U methyltransferase family. RlmD subfamily.

It carries out the reaction uridine(1939) in 23S rRNA + S-adenosyl-L-methionine = 5-methyluridine(1939) in 23S rRNA + S-adenosyl-L-homocysteine + H(+). Functionally, catalyzes the formation of 5-methyl-uridine at position 1939 (m5U1939) in 23S rRNA. The chain is 23S rRNA (uracil(1939)-C(5))-methyltransferase RlmD from Ralstonia nicotianae (strain ATCC BAA-1114 / GMI1000) (Ralstonia solanacearum).